Here is a 350-residue protein sequence, read N- to C-terminus: Putative zinc metalloprotease jhp_0242 (350 aa).

His16 is a binding site for Zn(2+). Residue Glu17 is part of the active site. His20 is a binding site for Zn(2+). 5 consecutive transmembrane segments (helical) span residues 43–63 (WFFK…GGYV), 94–114 (LWIL…VYFF), 249–269 (LIMG…VGAL), 277–297 (MLLL…LLPI), and 326–346 (LWLV…FNDI). Residues 108–177 (AVLVYFFLAL…GELILEIERN (70 aa)) form the PDZ domain.

The protein belongs to the peptidase M50B family. It depends on Zn(2+) as a cofactor.

It is found in the cell inner membrane. This Helicobacter pylori (strain J99 / ATCC 700824) (Campylobacter pylori J99) protein is Putative zinc metalloprotease jhp_0242.